A 719-amino-acid polypeptide reads, in one-letter code: 2'-5'-oligoadenylate synthase 2 (719 aa).

A lipid anchor (N-myristoyl glycine) is attached at Gly2. OAS domain regions lie at residues 11–335 (VPAQ…SWNV) and 343–683 (TPGH…WKVP). An N6-acetyllysine modification is found at Lys378. Residue Ser396 participates in ATP binding. Residues Asp408, Asp410, and Asp481 each contribute to the Mg(2+) site. Residues Arg544 and Lys547 each contribute to the ATP site.

Belongs to the 2-5A synthase family. Homodimer. Mg(2+) is required as a cofactor. Post-translationally, myristoylation is not essential for its activity. Glycosylated. Glycosylation is essential for its activity.

Its subcellular location is the cytoplasm. It localises to the perinuclear region. The enzyme catalyses 3 ATP = 5'-triphosphoadenylyl-(2'-&gt;5')-adenylyl-(2'-&gt;5')-adenosine + 2 diphosphate. With respect to regulation, produced as a latent enzyme which is activated by double stranded RNA (dsRNA) generated during the course of viral infection. The dsRNA activator must be at least 15 nucleotides long, and no modification of the 2'-hydroxyl group is tolerated. ssRNA or dsDNA do not act as activators. Strongly inhibited by copper, iron and zinc ions. Partially inhibited by cobalt and nickel ions. In terms of biological role, interferon-induced, dsRNA-activated antiviral enzyme which plays a critical role in cellular innate antiviral response. Activated by detection of double stranded RNA (dsRNA): polymerizes higher oligomers of 2'-5'-oligoadenylates (2-5A) from ATP which then bind to the inactive monomeric form of ribonuclease L (RNASEL) leading to its dimerization and subsequent activation. Activation of RNASEL leads to degradation of cellular as well as viral RNA, resulting in the inhibition of protein synthesis, thus terminating viral replication. Can mediate the antiviral effect via the classical RNASEL-dependent pathway or an alternative antiviral pathway independent of RNASEL. In addition, it may also play a role in other cellular processes such as apoptosis, cell growth, differentiation and gene regulation. May act as a negative regulator of lactation, stopping lactation in virally infected mammary gland lobules, thereby preventing transmission of viruses to neonates. Non-infected lobules would not be affected, allowing efficient pup feeding during infection. The sequence is that of 2'-5'-oligoadenylate synthase 2 from Homo sapiens (Human).